A 630-amino-acid polypeptide reads, in one-letter code: 1-deoxy-D-xylulose-5-phosphate synthase (630 aa).

Thiamine diphosphate is bound by residues H72 and 113-115 (GHS). D144 lines the Mg(2+) pocket. Residues 145 to 146 (GA), N173, Y284, and E367 contribute to the thiamine diphosphate site. Residue N173 coordinates Mg(2+).

The protein belongs to the transketolase family. DXPS subfamily. As to quaternary structure, homodimer. It depends on Mg(2+) as a cofactor. Thiamine diphosphate is required as a cofactor.

It catalyses the reaction D-glyceraldehyde 3-phosphate + pyruvate + H(+) = 1-deoxy-D-xylulose 5-phosphate + CO2. It participates in metabolic intermediate biosynthesis; 1-deoxy-D-xylulose 5-phosphate biosynthesis; 1-deoxy-D-xylulose 5-phosphate from D-glyceraldehyde 3-phosphate and pyruvate: step 1/1. Catalyzes the acyloin condensation reaction between C atoms 2 and 3 of pyruvate and glyceraldehyde 3-phosphate to yield 1-deoxy-D-xylulose-5-phosphate (DXP). The sequence is that of 1-deoxy-D-xylulose-5-phosphate synthase from Bacillus mycoides (strain KBAB4) (Bacillus weihenstephanensis).